The following is a 429-amino-acid chain: GTPase Obg (429 aa).

The Obg domain occupies 1–158 (MFVDQVKIYV…RNVQLELKVL (158 aa)). Residues 124-145 (RGNKRFATPANPAPELSENGEP) are disordered. The 171-residue stretch at 159–329 (ADVGLVGFPS…LLLAIADKLE (171 aa)) folds into the OBG-type G domain. GTP contacts are provided by residues 165–172 (GFPSVGKS), 190–194 (FTTIV), 212–215 (DLPG), 282–285 (NKMD), and 310–312 (SAV). Residues serine 172 and threonine 192 each coordinate Mg(2+). Positions 351–429 (KYVAEEPDFE…LLDYEFEFMD (79 aa)) constitute an OCT domain.

This sequence belongs to the TRAFAC class OBG-HflX-like GTPase superfamily. OBG GTPase family. As to quaternary structure, monomer. The cofactor is Mg(2+).

The protein localises to the cytoplasm. Its function is as follows. An essential GTPase which binds GTP, GDP and possibly (p)ppGpp with moderate affinity, with high nucleotide exchange rates and a fairly low GTP hydrolysis rate. Plays a role in control of the cell cycle, stress response, ribosome biogenesis and in those bacteria that undergo differentiation, in morphogenesis control. This is GTPase Obg from Listeria innocua serovar 6a (strain ATCC BAA-680 / CLIP 11262).